A 390-amino-acid polypeptide reads, in one-letter code: Transposase for insertion sequence element IS21 (390 aa).

Positions 5 to 66 (EDFYMIKQMR…PFMDYIDMRL (62 aa)) constitute an HTH IS21-type domain. The segment at residues 20–39 (IVDIATQIGCSERTVRRYLK) is a DNA-binding region (H-T-H motif). Residues 111–285 (FETQPRYQLQ…TPEQRFALEQ (175 aa)) form the Integrase catalytic domain.

Belongs to the transposase IS21/IS408/IS1162 family.

In terms of biological role, involved in the transposition of the insertion sequence. This chain is Transposase for insertion sequence element IS21 (istA), found in Pseudomonas aeruginosa.